The primary structure comprises 397 residues: 8-amino-7-oxononanoate synthase (397 aa).

Position 21 (Arg21) interacts with substrate. 110 to 111 (GY) contributes to the pyridoxal 5'-phosphate binding site. His135 provides a ligand contact to substrate. Residues Ser181, His209, and Thr238 each contribute to the pyridoxal 5'-phosphate site. At Lys241 the chain carries N6-(pyridoxal phosphate)lysine. Residue Thr355 coordinates substrate.

The protein belongs to the class-II pyridoxal-phosphate-dependent aminotransferase family. BioF subfamily. As to quaternary structure, homodimer. The cofactor is pyridoxal 5'-phosphate.

The enzyme catalyses 6-carboxyhexanoyl-[ACP] + L-alanine + H(+) = (8S)-8-amino-7-oxononanoate + holo-[ACP] + CO2. It participates in cofactor biosynthesis; biotin biosynthesis. Catalyzes the decarboxylative condensation of pimeloyl-[acyl-carrier protein] and L-alanine to produce 8-amino-7-oxononanoate (AON), [acyl-carrier protein], and carbon dioxide. This Saccharophagus degradans (strain 2-40 / ATCC 43961 / DSM 17024) protein is 8-amino-7-oxononanoate synthase.